We begin with the raw amino-acid sequence, 106 residues long: Iron-sulfur cluster assembly protein CyaY (106 aa).

Belongs to the frataxin family.

In terms of biological role, involved in iron-sulfur (Fe-S) cluster assembly. May act as a regulator of Fe-S biogenesis. The chain is Iron-sulfur cluster assembly protein CyaY from Shigella flexneri.